A 403-amino-acid chain; its full sequence is Ribonuclease T2-like (403 aa).

An N-terminal signal peptide occupies residues 1–19; sequence MLALILTISICIFLKGSTC. 4 disulfide bridges follow: Cys36/Cys55, Cys44/Cys91, Cys54/Cys158, and Cys99/Cys150. N-linked (GlcNAc...) asparagine glycosylation is present at Asn78. Catalysis depends on residues His84, Glu143, and His147. Residue Asn175 is glycosylated (N-linked (GlcNAc...) asparagine). Cys224 and Cys259 are disulfide-bonded. The disordered stretch occupies residues 268 to 288; it reads PKNGFNPGPQPPKSPRKGYLE.

It belongs to the RNase T2 family.

The protein localises to the vacuole lumen. It localises to the cytoplasm. It catalyses the reaction a ribonucleotidyl-ribonucleotide-RNA + H2O = a 3'-end 3'-phospho-ribonucleotide-RNA + a 5'-end dephospho-ribonucleoside-RNA + H(+). In terms of biological role, rnase which modulates cell survival under stress conditions. Released from the vacuole to the cytoplasm during stress to promote tRNA and rRNA cleavage and to activate separately a downstream pathway that promotes cell death. Involved in cell size, vacuolar morphology and growth at high temperatures and high salt concentration. The protein is Ribonuclease T2-like (RNY1) of Debaryomyces hansenii (strain ATCC 36239 / CBS 767 / BCRC 21394 / JCM 1990 / NBRC 0083 / IGC 2968) (Yeast).